Here is a 183-residue protein sequence, read N- to C-terminus: uncharacterized protein (183 aa).

Positions 54–89 are disordered; that stretch reads DAASQSDPLPGGDGLTGGDSKATRRTSPRYYPPSEA.

This is an uncharacterized protein from Human cytomegalovirus (strain AD169) (HHV-5).